The sequence spans 818 residues: IQ and AAA domain-containing protein 1-like (818 aa).

Residues 206-235 form the IQ domain; sequence QGQAAVTIQKVWKGYLQRKRTQQDRRMEME. Disordered stretches follow at residues 344–377 and 458–482; these read QMQE…AKKG and EERP…KDLT. Over residues 463–476 the composition is skewed to basic residues; it reads RAPKKTPGKKTGKK. 567 to 574 contacts ATP; the sequence is GPSGMGKK. Positions 795 to 818 are disordered; the sequence is SMKHRMDQLEAEEAKLDKEKKKRK. The span at 798-818 shows a compositional bias: basic and acidic residues; that stretch reads HRMDQLEAEEAKLDKEKKKRK.

It belongs to the AAA ATPase family.

This Homo sapiens (Human) protein is IQ and AAA domain-containing protein 1-like (IQCA1L).